Consider the following 202-residue polypeptide: Matrix protein (202 aa).

The short motif at 35 to 38 is the PPXY motif element; it reads PPEY. The interval 115–151 is essential for glycoprotein binding; it reads KLRRTLIFQWADSRGPLEGEELEYSQEITWDDNTEFV.

This sequence belongs to the lyssavirus matrix protein family. Homomultimer. Interacts with nucleoprotein and with the cytoplasmic domain of glycoprotein. Interacts with host ATP6V1A; this interaction plays an important role in virion uncoating after viral entry.

The protein resides in the virion membrane. It is found in the host endomembrane system. It localises to the host cytoplasm. Its function is as follows. Plays a major role in assembly, budding and uncoating of virion after membrane fusion. Completely covers the ribonucleoprotein coil and keep it in condensed bullet-shaped form. Inhibits viral transcription and stimulates replication. Plays a major role in early induction of TRAIL-mediated apoptosis in infected neurons. Inhibits the integrated stress response (ISR) in the infected cell by blocking the formation of stress granules. This chain is Matrix protein (M), found in Homo sapiens (Human).